The sequence spans 66 residues: Brevinin-1DYb (66 aa).

The first 22 residues, 1–22 (MFTLKKSLLLLFFLGTISLSLC), serve as a signal peptide directing secretion. A propeptide spanning residues 23–44 (EEERNAEEERRDYPEERDVEVE) is cleaved from the precursor. Cys60 and Cys66 are oxidised to a cystine.

In terms of tissue distribution, expressed by the skin glands.

The protein resides in the secreted. Its function is as follows. Antimicrobial peptide. Has low activity against the Gram-positive bacterium S.aureus and the Gram-negative bacterium E.coli (MIC&lt;15 uM). Has a strong hemolytic activity. The protein is Brevinin-1DYb of Rana dybowskii (Dybovsky's frog).